We begin with the raw amino-acid sequence, 561 residues long: Dihydroxy-acid dehydratase 2 (561 aa).

[2Fe-2S] cluster is bound at residue cysteine 53. Aspartate 85 contributes to the Mg(2+) binding site. [2Fe-2S] cluster is bound at residue cysteine 126. Mg(2+) is bound by residues aspartate 127 and lysine 128. Lysine 128 bears the N6-carboxylysine mark. Cysteine 195 is a binding site for [2Fe-2S] cluster. Glutamate 446 provides a ligand contact to Mg(2+). Serine 472 (proton acceptor) is an active-site residue.

Belongs to the IlvD/Edd family. Homodimer. It depends on [2Fe-2S] cluster as a cofactor. Mg(2+) serves as cofactor.

The catalysed reaction is (2R)-2,3-dihydroxy-3-methylbutanoate = 3-methyl-2-oxobutanoate + H2O. It catalyses the reaction (2R,3R)-2,3-dihydroxy-3-methylpentanoate = (S)-3-methyl-2-oxopentanoate + H2O. Its pathway is amino-acid biosynthesis; L-isoleucine biosynthesis; L-isoleucine from 2-oxobutanoate: step 3/4. It participates in amino-acid biosynthesis; L-valine biosynthesis; L-valine from pyruvate: step 3/4. Its function is as follows. Functions in the biosynthesis of branched-chain amino acids. Catalyzes the dehydration of (2R,3R)-2,3-dihydroxy-3-methylpentanoate (2,3-dihydroxy-3-methylvalerate) into 2-oxo-3-methylpentanoate (2-oxo-3-methylvalerate) and of (2R)-2,3-dihydroxy-3-methylbutanoate (2,3-dihydroxyisovalerate) into 2-oxo-3-methylbutanoate (2-oxoisovalerate), the penultimate precursor to L-isoleucine and L-valine, respectively. This chain is Dihydroxy-acid dehydratase 2, found in Acinetobacter baylyi (strain ATCC 33305 / BD413 / ADP1).